A 459-amino-acid polypeptide reads, in one-letter code: Ribulose bisphosphate carboxylase (459 aa).

Residue asparagine 111 participates in substrate binding. Lysine 166 (proton acceptor) is an active-site residue. Substrate is bound at residue lysine 168. Mg(2+) contacts are provided by lysine 191, aspartate 193, and glutamate 194. Lysine 191 is modified (N6-carboxylysine). Catalysis depends on histidine 287, which acts as the Proton acceptor. Arginine 288, histidine 321, and serine 368 together coordinate substrate.

This sequence belongs to the RuBisCO large chain family. Type II subfamily. As to quaternary structure, homodimer. Mg(2+) serves as cofactor.

The enzyme catalyses 2 (2R)-3-phosphoglycerate + 2 H(+) = D-ribulose 1,5-bisphosphate + CO2 + H2O. The catalysed reaction is D-ribulose 1,5-bisphosphate + O2 = 2-phosphoglycolate + (2R)-3-phosphoglycerate + 2 H(+). Functionally, ruBisCO catalyzes two reactions: the carboxylation of D-ribulose 1,5-bisphosphate, the primary event in carbon dioxide fixation, as well as the oxidative fragmentation of the pentose substrate. Both reactions occur simultaneously and in competition at the same active site. The chain is Ribulose bisphosphate carboxylase from Albidiferax ferrireducens (strain ATCC BAA-621 / DSM 15236 / T118) (Rhodoferax ferrireducens).